A 158-amino-acid polypeptide reads, in one-letter code: Fluoride-specific ion channel FluC 2 (158 aa).

Helical transmembrane passes span 25-45 (AWHG…IGGT), 63-83 (WTTF…MVVI), 95-115 (PFFG…AVDI), and 126-146 (TALA…RLAA). 2 residues coordinate Na(+): G103 and T106.

This sequence belongs to the fluoride channel Fluc/FEX (TC 1.A.43) family.

Its subcellular location is the cell membrane. It catalyses the reaction fluoride(in) = fluoride(out). With respect to regulation, na(+) is not transported, but it plays an essential structural role and its presence is essential for fluoride channel function. Its function is as follows. Fluoride-specific ion channel. Important for reducing fluoride concentration in the cell, thus reducing its toxicity. The polypeptide is Fluoride-specific ion channel FluC 2 (Streptomyces avermitilis (strain ATCC 31267 / DSM 46492 / JCM 5070 / NBRC 14893 / NCIMB 12804 / NRRL 8165 / MA-4680)).